Reading from the N-terminus, the 135-residue chain is Ribonuclease P protein component 2 (135 aa).

It belongs to the eukaryotic/archaeal RNase P protein component 2 family. As to quaternary structure, consists of a catalytic RNA component and at least 4-5 protein subunits.

Its subcellular location is the cytoplasm. The catalysed reaction is Endonucleolytic cleavage of RNA, removing 5'-extranucleotides from tRNA precursor.. Functionally, part of ribonuclease P, a protein complex that generates mature tRNA molecules by cleaving their 5'-ends. This is Ribonuclease P protein component 2 from Methanococcus aeolicus (strain ATCC BAA-1280 / DSM 17508 / OCM 812 / Nankai-3).